We begin with the raw amino-acid sequence, 59 residues long: MTGTTLFDRRMLEALVCPVTQAGLAYDADRQELISKQARLAFPIRDGIPIMLVSEAREL.

Belongs to the UPF0434 family.

This Cereibacter sphaeroides (strain ATCC 17023 / DSM 158 / JCM 6121 / CCUG 31486 / LMG 2827 / NBRC 12203 / NCIMB 8253 / ATH 2.4.1.) (Rhodobacter sphaeroides) protein is UPF0434 protein RHOS4_00640.